A 630-amino-acid polypeptide reads, in one-letter code: Probable potassium transport system protein Kup (630 aa).

Transmembrane regions (helical) follow at residues 17-37, 51-71, 105-125, 144-164, 175-195, 218-238, 255-275, 283-303, 344-364, 374-394, 402-422, and 428-448; these read LAIAAIGVVFGDIGTSPLYSL, PSAILGVISLLFWAIILVVGI, ITGLMMALGIFGACMFYGDAV, PQLSHLVLPITIVILIALFWI, LFGPIMVIWFVTIAALGVYHI, VLLAYVVLGSVVLVLTGAEAL, YVLVMPSLVLNYFGQGALLLL, PFFLLAPQWAALPLVVLSTVA, IYVPVVNWLLLFVILCIVIGF, YGIAVTATMVITTILAAVVMV, LLVAMIIGVFLVIDLGFFGAN, and QGGWLPLGIGALLFFLLMTWY.

This sequence belongs to the HAK/KUP transporter (TC 2.A.72) family.

It is found in the cell inner membrane. It carries out the reaction K(+)(in) + H(+)(in) = K(+)(out) + H(+)(out). Transport of potassium into the cell. Likely operates as a K(+):H(+) symporter. In Burkholderia thailandensis (strain ATCC 700388 / DSM 13276 / CCUG 48851 / CIP 106301 / E264), this protein is Probable potassium transport system protein Kup.